Consider the following 361-residue polypeptide: Chorismate synthase (361 aa).

Arg48 and Arg54 together coordinate NADP(+). FMN contacts are provided by residues 125–127, 238–239, Gly278, 293–297, and Arg319; these read RSS, NA, and KPTSS.

The protein belongs to the chorismate synthase family. In terms of assembly, homotetramer. It depends on FMNH2 as a cofactor.

It carries out the reaction 5-O-(1-carboxyvinyl)-3-phosphoshikimate = chorismate + phosphate. It functions in the pathway metabolic intermediate biosynthesis; chorismate biosynthesis; chorismate from D-erythrose 4-phosphate and phosphoenolpyruvate: step 7/7. Functionally, catalyzes the anti-1,4-elimination of the C-3 phosphate and the C-6 proR hydrogen from 5-enolpyruvylshikimate-3-phosphate (EPSP) to yield chorismate, which is the branch point compound that serves as the starting substrate for the three terminal pathways of aromatic amino acid biosynthesis. This reaction introduces a second double bond into the aromatic ring system. In Citrobacter koseri (strain ATCC BAA-895 / CDC 4225-83 / SGSC4696), this protein is Chorismate synthase.